The primary structure comprises 155 residues: MQIKQIEGSLSAKGARFALVVSRFNDFIGQKLVEGALDCLRRHGAEDSEVVIYRCPGAFELPMVAKKAALSGNHDAVIALGVIIRGSTPHFDVIAAEATKGLAQVALDTMIPVAFGVLTTENLEQAIERAGTKAGNKGFDAAMTVIEMVNLYRQF.

5-amino-6-(D-ribitylamino)uracil-binding positions include Phe-24, Ala-58–Glu-60, and Val-82–Ile-84. A (2S)-2-hydroxy-3-oxobutyl phosphate-binding site is contributed by Ser-87 to Thr-88. His-90 acts as the Proton donor in catalysis. Phe-115 is a binding site for 5-amino-6-(D-ribitylamino)uracil. Arg-129 serves as a coordination point for (2S)-2-hydroxy-3-oxobutyl phosphate.

Belongs to the DMRL synthase family.

It carries out the reaction (2S)-2-hydroxy-3-oxobutyl phosphate + 5-amino-6-(D-ribitylamino)uracil = 6,7-dimethyl-8-(1-D-ribityl)lumazine + phosphate + 2 H2O + H(+). The protein operates within cofactor biosynthesis; riboflavin biosynthesis; riboflavin from 2-hydroxy-3-oxobutyl phosphate and 5-amino-6-(D-ribitylamino)uracil: step 1/2. Catalyzes the formation of 6,7-dimethyl-8-ribityllumazine by condensation of 5-amino-6-(D-ribitylamino)uracil with 3,4-dihydroxy-2-butanone 4-phosphate. This is the penultimate step in the biosynthesis of riboflavin. In Chlorobium phaeobacteroides (strain DSM 266 / SMG 266 / 2430), this protein is 6,7-dimethyl-8-ribityllumazine synthase.